A 1171-amino-acid chain; its full sequence is Phytochrome B (1171 aa).

Residues 1–19 (MASGSRATPTRSPSSARPA) show a composition bias toward low complexity. The segment at 1 to 53 (MASGSRATPTRSPSSARPAAPRHQHHHSQSSGGSTSRAGGGGGGGGGGGGGAA) is disordered. Positions 38-52 (AGGGGGGGGGGGGGA) are enriched in gly residues. A GAF domain is found at 259–442 (DVKLLCDTVV…AFGLQLNMEL (184 aa)). Residue cysteine 364 coordinates phytochromobilin. PAS domains are found at residues 661–732 (VARE…LRGD) and 795–866 (DYKA…MIVL). Residues 943–1161 (YIYQEIKNPL…FFHIVLELPQ (219 aa)) form the Histidine kinase domain.

This sequence belongs to the phytochrome family. As to quaternary structure, homodimer. Post-translationally, contains one covalently linked phytochromobilin chromophore.

Functionally, regulatory photoreceptor which exists in two forms that are reversibly interconvertible by light: the Pr form that absorbs maximally in the red region of the spectrum and the Pfr form that absorbs maximally in the far-red region. Photoconversion of Pr to Pfr induces an array of morphogenic responses, whereas reconversion of Pfr to Pr cancels the induction of those responses. Pfr controls the expression of a number of nuclear genes including those encoding the small subunit of ribulose-bisphosphate carboxylase, chlorophyll A/B binding protein, protochlorophyllide reductase, rRNA, etc. It also controls the expression of its own gene(s) in a negative feedback fashion. This is Phytochrome B (PHYB) from Oryza sativa subsp. indica (Rice).